A 524-amino-acid polypeptide reads, in one-letter code: Chromosomal replication initiator protein DnaA (524 aa).

The domain I, interacts with DnaA modulators stretch occupies residues 1 to 73; that stretch reads MELPESAWEQ…DELLSSADHH (73 aa). The interval 73-187 is domain II; it reads HPITSVEISV…DVEGGLQHKS (115 aa). Polar residues-rich tracts occupy residues 86–95, 106–126, and 153–165; these read RSTSFETNQG, APRQ…QPQQ, and NGYN…QPYN. The interval 86 to 173 is disordered; it reads RSTSFETNQG…YNDNPMGQGK (88 aa). The tract at residues 188 to 404 is domain III, AAA+ region; the sequence is NLNPTFIFDN…GALKRVIANA (217 aa). ATP is bound by residues G232, G234, K235, and T236. The segment at 405–524 is domain IV, binds dsDNA; the sequence is HFTGRDISVE…VKNLLRTLTT (120 aa).

It belongs to the DnaA family. As to quaternary structure, oligomerizes as a right-handed, spiral filament on DNA at oriC.

The protein resides in the cytoplasm. Functionally, plays an essential role in the initiation and regulation of chromosomal replication. ATP-DnaA binds to the origin of replication (oriC) to initiate formation of the DNA replication initiation complex once per cell cycle. Binds the DnaA box (a 9 base pair repeat at the origin) and separates the double-stranded (ds)DNA. Forms a right-handed helical filament on oriC DNA; dsDNA binds to the exterior of the filament while single-stranded (ss)DNA is stabiized in the filament's interior. The ATP-DnaA-oriC complex binds and stabilizes one strand of the AT-rich DNA unwinding element (DUE), permitting loading of DNA polymerase. After initiation quickly degrades to an ADP-DnaA complex that is not apt for DNA replication. Binds acidic phospholipids. This is Chromosomal replication initiator protein DnaA from Saccharophagus degradans (strain 2-40 / ATCC 43961 / DSM 17024).